The sequence spans 374 residues: tRNA-specific 2-thiouridylase MnmA (374 aa).

Residues 15 to 22 (GMSGGVDS) and Met41 contribute to the ATP site. Residues 101–103 (NPD) are interaction with target base in tRNA. Catalysis depends on Cys106, which acts as the Nucleophile. Cys106 and Cys206 are oxidised to a cystine. Gly130 is a binding site for ATP. The interaction with tRNA stretch occupies residues 156 to 158 (KDQ). Cys206 acts as the Cysteine persulfide intermediate in catalysis. The tract at residues 324–325 (RY) is interaction with tRNA.

Belongs to the MnmA/TRMU family.

The protein resides in the cytoplasm. The enzyme catalyses S-sulfanyl-L-cysteinyl-[protein] + uridine(34) in tRNA + AH2 + ATP = 2-thiouridine(34) in tRNA + L-cysteinyl-[protein] + A + AMP + diphosphate + H(+). Catalyzes the 2-thiolation of uridine at the wobble position (U34) of tRNA, leading to the formation of s(2)U34. This is tRNA-specific 2-thiouridylase MnmA from Aromatoleum aromaticum (strain DSM 19018 / LMG 30748 / EbN1) (Azoarcus sp. (strain EbN1)).